We begin with the raw amino-acid sequence, 339 residues long: D-erythrose-4-phosphate dehydrogenase (339 aa).

Residues 12–13 (RI) and R81 contribute to the NAD(+) site. Residues 154 to 156 (SCT), R200, 213 to 214 (TK), and R236 each bind substrate. C155 (nucleophile) is an active-site residue. An NAD(+)-binding site is contributed by N318.

Belongs to the glyceraldehyde-3-phosphate dehydrogenase family. Epd subfamily. As to quaternary structure, homotetramer.

Its subcellular location is the cytoplasm. It catalyses the reaction D-erythrose 4-phosphate + NAD(+) + H2O = 4-phospho-D-erythronate + NADH + 2 H(+). The protein operates within cofactor biosynthesis; pyridoxine 5'-phosphate biosynthesis; pyridoxine 5'-phosphate from D-erythrose 4-phosphate: step 1/5. Its function is as follows. Catalyzes the NAD-dependent conversion of D-erythrose 4-phosphate to 4-phosphoerythronate. This is D-erythrose-4-phosphate dehydrogenase from Shigella dysenteriae serotype 1 (strain Sd197).